The following is a 351-amino-acid chain: Ribonucleoside-diphosphate reductase subunit beta (351 aa).

Residues aspartate 94, glutamate 124, and histidine 127 each coordinate Fe cation. Tyrosine 131 is a catalytic residue. Fe cation is bound by residues glutamate 191, glutamate 225, and histidine 228.

It belongs to the ribonucleoside diphosphate reductase small chain family. Tetramer of two alpha and two beta subunits. The cofactor is Fe cation.

The enzyme catalyses a 2'-deoxyribonucleoside 5'-diphosphate + [thioredoxin]-disulfide + H2O = a ribonucleoside 5'-diphosphate + [thioredoxin]-dithiol. In terms of biological role, provides the precursors necessary for DNA synthesis. Catalyzes the biosynthesis of deoxyribonucleotides from the corresponding ribonucleotides. The sequence is that of Ribonucleoside-diphosphate reductase subunit beta (nrdB) from Treponema pallidum (strain Nichols).